Here is a 442-residue protein sequence, read N- to C-terminus: UPF0489 protein C5orf22 homolog (442 aa).

The disordered stretch occupies residues 175–208; that stretch reads SSAKKPKLALEDSRNTASTNCDSSSEGLEKDTAT. The segment covering 189 to 200 has biased composition (polar residues); sequence NTASTNCDSSSE.

The protein belongs to the UPF0489 family.

This is UPF0489 protein C5orf22 homolog from Pongo abelii (Sumatran orangutan).